The primary structure comprises 111 residues: Phosphoribosyl-ATP pyrophosphatase (111 aa).

The protein belongs to the PRA-PH family.

The protein localises to the cytoplasm. It catalyses the reaction 1-(5-phospho-beta-D-ribosyl)-ATP + H2O = 1-(5-phospho-beta-D-ribosyl)-5'-AMP + diphosphate + H(+). Its pathway is amino-acid biosynthesis; L-histidine biosynthesis; L-histidine from 5-phospho-alpha-D-ribose 1-diphosphate: step 2/9. This Pseudomonas putida (strain GB-1) protein is Phosphoribosyl-ATP pyrophosphatase.